We begin with the raw amino-acid sequence, 117 residues long: Peptidyl-tRNA hydrolase (117 aa).

This sequence belongs to the PTH2 family.

The protein localises to the cytoplasm. The catalysed reaction is an N-acyl-L-alpha-aminoacyl-tRNA + H2O = an N-acyl-L-amino acid + a tRNA + H(+). Its function is as follows. The natural substrate for this enzyme may be peptidyl-tRNAs which drop off the ribosome during protein synthesis. The polypeptide is Peptidyl-tRNA hydrolase (Thermoplasma volcanium (strain ATCC 51530 / DSM 4299 / JCM 9571 / NBRC 15438 / GSS1)).